The following is a 529-amino-acid chain: T-complex protein 1 subunit delta (529 aa).

It belongs to the TCP-1 chaperonin family. As to quaternary structure, heterooligomeric complex of about 850 to 900 kDa that forms two stacked rings, 12 to 16 nm in diameter.

It localises to the cytoplasm. In terms of biological role, molecular chaperone; assists the folding of proteins upon ATP hydrolysis. Known to play a role, in vitro, in the folding of actin and tubulin. This is T-complex protein 1 subunit delta (CCT4) from Eremothecium gossypii (strain ATCC 10895 / CBS 109.51 / FGSC 9923 / NRRL Y-1056) (Yeast).